The primary structure comprises 295 residues: RNA polymerase sigma factor RpoH (295 aa).

Residues 52 to 121 (MVTSHLRLVA…IQEYILRSWS (70 aa)) are sigma-70 factor domain-2. Residues 76–79 (EVIS) carry the Interaction with polymerase core subunit RpoC motif. The segment at 230-281 (AMVELTDRERHILTERRLKDDPTTLEELAAQYGVSRERVRQIEVRAFEKLQK) is sigma-70 factor domain-4. Residues 254–273 (LEELAAQYGVSRERVRQIEV) constitute a DNA-binding region (H-T-H motif).

This sequence belongs to the sigma-70 factor family. RpoH subfamily. Interacts with the RNA polymerase core enzyme.

It is found in the cytoplasm. Functionally, sigma factors are initiation factors that promote the attachment of RNA polymerase to specific initiation sites and are then released. This sigma factor is involved in regulation of expression of heat shock genes. In Caulobacter vibrioides (strain ATCC 19089 / CIP 103742 / CB 15) (Caulobacter crescentus), this protein is RNA polymerase sigma factor RpoH.